Reading from the N-terminus, the 617-residue chain is Vacuolar protein sorting-associated protein 33B (617 aa).

The protein belongs to the STXBP/unc-18/SEC1 family. As to quaternary structure, interacts with vipas39. In terms of tissue distribution, widely expressed from 4 hours post-fertilization (hpf) to 24 hpf. At 48 hpf, localized to brain, retina, ear, liver and proximal intestine. This expression pattern is more pronounced at 72 hpf and persists through 5 days post-fertilization (dpf). At 3 dpf and 4 dpf, expression in the liver is predominantly in developing biliary epithelial cells. No expression detected in kidney or spinal cord.

It is found in the late endosome membrane. It localises to the lysosome membrane. In terms of biological role, may play a role in vesicle-mediated protein trafficking to lysosomal compartments and in membrane docking/fusion reactions of late endosomes/lysosomes. Required for proper trafficking and targeting of the collagen-modifying enzyme lysyl hydroxylase 3 (LH3) to intracellular collagen. Mediates phagolysosomal fusion in macrophages. Proposed to be involved in endosomal maturation implicating vipas39. In epithelial cells, the vps33b:vipas39 complex may play a role in the apical recycling pathway and in the maintenance of the apical-basolateral polarity. Plays a role in bile duct development. The protein is Vacuolar protein sorting-associated protein 33B of Danio rerio (Zebrafish).